The sequence spans 286 residues: CDP-diacylglycerol--serine O-phosphatidyltransferase (286 aa).

6 helical membrane passes run 15 to 35, 74 to 94, 95 to 115, 135 to 155, 167 to 187, and 207 to 227; these read ILPS…IKFA, IDSL…LYVS, MLSK…CVVL, EFFV…LLAL, GWFL…GIPM, and LAIC…VIII.

This sequence belongs to the CDP-alcohol phosphatidyltransferase class-I family.

The protein resides in the cell membrane. The enzyme catalyses a CDP-1,2-diacyl-sn-glycerol + L-serine = a 1,2-diacyl-sn-glycero-3-phospho-L-serine + CMP + H(+). This is CDP-diacylglycerol--serine O-phosphatidyltransferase (pssA) from Mycobacterium tuberculosis (strain ATCC 25618 / H37Rv).